The chain runs to 146 residues: Ribonuclease VapC41 (146 aa).

Positions 3–142 constitute a PINc domain; that stretch reads LCDTNIWLAL…FTQYGGIELR (140 aa). Positions 5 and 112 each coordinate Mg(2+).

It belongs to the PINc/VapC protein family. Mg(2+) serves as cofactor.

In terms of biological role, toxic component of a type II toxin-antitoxin (TA) system. An RNase. Its toxic effect is neutralized by coexpression with cognate antitoxin VapB41. The polypeptide is Ribonuclease VapC41 (Mycobacterium tuberculosis (strain CDC 1551 / Oshkosh)).